A 284-amino-acid polypeptide reads, in one-letter code: Diaminopimelate epimerase (284 aa).

Substrate is bound by residues asparagine 14 and asparagine 67. Residue cysteine 76 is the Proton donor of the active site. Substrate-binding positions include 77–78, asparagine 166, asparagine 199, and 217–218; these read GN and ER. Cysteine 226 acts as the Proton acceptor in catalysis. 227 to 228 serves as a coordination point for substrate; sequence GT.

It belongs to the diaminopimelate epimerase family. Homodimer.

The protein localises to the cytoplasm. It catalyses the reaction (2S,6S)-2,6-diaminopimelate = meso-2,6-diaminopimelate. Its pathway is amino-acid biosynthesis; L-lysine biosynthesis via DAP pathway; DL-2,6-diaminopimelate from LL-2,6-diaminopimelate: step 1/1. In terms of biological role, catalyzes the stereoinversion of LL-2,6-diaminopimelate (L,L-DAP) to meso-diaminopimelate (meso-DAP), a precursor of L-lysine and an essential component of the bacterial peptidoglycan. The sequence is that of Diaminopimelate epimerase from Bacillus pumilus (strain SAFR-032).